Consider the following 389-residue polypeptide: PqqA peptide cyclase (389 aa).

In terms of domain architecture, Radical SAM core spans Val-19 to Ala-234. Cys-33, Cys-37, and Cys-40 together coordinate [4Fe-4S] cluster.

It belongs to the radical SAM superfamily. PqqE family. Interacts with PqqD. The interaction is necessary for activity of PqqE. The cofactor is [4Fe-4S] cluster.

The catalysed reaction is [PQQ precursor protein] + S-adenosyl-L-methionine = E-Y cross-linked-[PQQ precursor protein] + 5'-deoxyadenosine + L-methionine + H(+). It functions in the pathway cofactor biosynthesis; pyrroloquinoline quinone biosynthesis. Catalyzes the cross-linking of a glutamate residue and a tyrosine residue in the PqqA protein as part of the biosynthesis of pyrroloquinoline quinone (PQQ). The chain is PqqA peptide cyclase from Pseudomonas syringae pv. syringae (strain B728a).